The chain runs to 417 residues: Transmembrane protease serine 11D (417 aa).

Topologically, residues 1–17 are cytoplasmic; the sequence is MYRPRSMVSPSRFFNPF. The helical; Signal-anchor for type II membrane protein transmembrane segment at 18 to 38 threads the bilayer; it reads MVALIVIITVGLLAMTAGLLI. Residues 39-417 are Extracellular-facing; the sequence is HFLAFDKRAY…RNWIRQQTGI (379 aa). Residues 46–162 enclose the SEA domain; sequence RAYFYHSNFH…SNGITSLTDQ (117 aa). Disulfide bonds link Cys-172–Cys-291, Cys-211–Cys-227, Cys-336–Cys-352, and Cys-363–Cys-392. The Peptidase S1 domain maps to 186-416; it reads IIGGTQAETG…YRNWIRQQTG (231 aa). Residues His-226 and Asp-271 each act as charge relay system in the active site. Residue Ser-367 is the Charge relay system of the active site.

Belongs to the peptidase S1 family. Monomer. As to expression, isoform 1 and isoform 2 are expressed in the esophagus, tongue and trachea. Isoform 2 is also highly expressed in the adrenal cortex and heart.

Its subcellular location is the cell membrane. The protein resides in the secreted. May play some biological role in the host defense system on the mucous membrane independently of or in cooperation with other substances in airway mucous or bronchial secretions. Plays a role in the proteolytic processing of ACE2. Preferentially cleaves the C-terminal side of arginine residues at the P1 position of certain peptides. Isoform 2 may play a key role in regulating adrenal proliferation by specifically cleaving N-POMC. This is Transmembrane protease serine 11D (Tmprss11d) from Rattus norvegicus (Rat).